Here is a 2451-residue protein sequence, read N- to C-terminus: Reducing polyketide synthase 8 (2451 aa).

In terms of domain architecture, Ketosynthase family 3 (KS3) spans 12-434; that stretch reads NEPIAIVGSS…GTNAHAILEA (423 aa). Catalysis depends on for beta-ketoacyl synthase activity residues C174, H313, and H354. In terms of domain architecture, Malonyl-CoA:ACP transacylase (MAT) spans 538-846; sequence VFTGQGAQWA…GPATETINNM (309 aa). Residues 940 to 1085 are N-terminal hotdog fold; that stretch reads HQLLGSASTF…GFLRIELGAP (146 aa). Residues 940–1254 enclose the PKS/mFAS DH domain; sequence HQLLGSASTF…LLNLPGSLRS (315 aa). The active-site Proton acceptor; for dehydratase activity is the H974. The segment at 1100 to 1254 is C-terminal hotdog fold; the sequence is LIPLDVEELY…LLNLPGSLRS (155 aa). D1160 (proton donor; for dehydratase activity) is an active-site residue. The interval 1294–1590 is methyltransfrase (MT) domain; that stretch reads LVLFYCQKVL…QHFCSVMLSQ (297 aa). A Ketoreductase (KR) domain is found at 2088-2266; sequence TYLLLGLAGD…PGCVVHIGGV (179 aa). In terms of domain architecture, Carrier spans 2366–2451; sequence DACLDLLLGG…LAIWRKQVKA (86 aa). O-(pantetheine 4'-phosphoryl)serine is present on S2404.

Pantetheine 4'-phosphate serves as cofactor.

Its pathway is secondary metabolite biosynthesis. Reducing polyketide synthase; part of the gene cluster that mediates the biosynthesis of fusamarins, isocoumarin derivatives that show moderate cytotoxicity with IC(50) values between 1 and 50 uM. The polyketide synthase FMN1 probably synthesizes two different polyketides, a tetra- and a pentaketide, containinga varying number of double bonds depending on the selective actions of the trans-enoyl reductase FMN2. Chain fusion will presumably be mediated by the KS domain before finally offloading is catalyzed by the alpha/beta hydrolase fold enzyme FMN3. This is Reducing polyketide synthase 8 from Fusarium mangiferae (Mango malformation disease fungus).